The sequence spans 688 residues: Envelope glycoprotein gp70 (688 aa).

Residues 1–15 are compositionally biased toward polar residues; the sequence is MPNHQSGSPTGSSDL. The segment at 1 to 31 is disordered; sequence MPNHQSGSPTGSSDLLLSGKKQRPHLALRRK. Positions 1 to 98 are cleaved as a signal peptide; that stretch reads MPNHQSGSPT…SVLGPPPVTG (98 aa). Basic residues predominate over residues 20 to 31; the sequence is KKQRPHLALRRK. The Extracellular segment spans residues 99–624; the sequence is ESYWAYLPKP…ALNPLDWTQY (526 aa). 2 N-linked (GlcNAc...) asparagine; by host glycosylation sites follow: Asn127 and Asn143. A coiled-coil region spans residues 426 to 474; it reads LLPVDIGDEPWFDDSAIQTFRYATDLIRAKRFVAAIILGISALIAIITS. A propeptide spanning residues 455–456 is cleaved from the precursor; the sequence is KR. The interval 457–477 is fusion peptide; sequence FVAAIILGISALIAIITSFAV. Residues 463 to 481 are immunosuppression; that stretch reads LGISALIAIITSFAVATTA. An N-linked (GlcNAc...) asparagine; by host glycan is attached at Asn498. The stretch at 511–541 forms a coiled coil; the sequence is LKLEARLNALEEVVLELGQDVANLKTRMSTR. Residue Asn557 is glycosylated (N-linked (GlcNAc...) asparagine; by host). A helical membrane pass occupies residues 625–645; the sequence is FIFIGVGALLLVIVLMIFPIV. At 646 to 688 the chain is on the cytoplasmic side; sequence FQCLAKSLDQVQSDLNVLLLKKKKGGNAAPAAEMVELPRVSYT.

In terms of assembly, the mature envelope protein (Env) consists of a trimer of SU-TM heterodimers attached by noncovalent interactions or by a labile interchain disulfide bond. In terms of processing, specific enzymatic cleavages in vivo yield mature proteins. Envelope glycoproteins are synthesized as an inactive precursor that is N-glycosylated and processed likely by host cell furin or by a furin-like protease in the Golgi to yield the mature SU and TM proteins. The cleavage site between SU and TM requires the minimal sequence [KR]-X-[KR]-R.

It localises to the virion membrane. Its subcellular location is the host cell membrane. In terms of biological role, the surface protein (SU) attaches the virus to the host cell by binding to its receptor. This interaction triggers the refolding of the transmembrane protein (TM) and is thought to activate its fusogenic potential by unmasking its fusion peptide. Fusion occurs at the host cell plasma membrane. The transmembrane protein (TM) acts as a class I viral fusion protein. Under the current model, the protein has at least 3 conformational states: pre-fusion native state, pre-hairpin intermediate state, and post-fusion hairpin state. During viral and target cell membrane fusion, the coiled coil regions (heptad repeats) assume a trimer-of-hairpins structure, positioning the fusion peptide in close proximity to the C-terminal region of the ectodomain. The formation of this structure appears to drive apposition and subsequent fusion of viral and target cell membranes. Membranes fusion leads to delivery of the nucleocapsid into the cytoplasm. This Mus musculus (Mouse) protein is Envelope glycoprotein gp70 (env).